A 364-amino-acid polypeptide reads, in one-letter code: MDLVLETLDHYIFDDVYAKIAPVELQRGIDDSLVNALSLNKIVSNSTLLHETLSITNSLKRVNKDVYGLTPFLFDFTEKTYASLLPRNNLIREFFSLWAVVTVFGLLLYLITASLSYVFVFDRTIFNHPKYLKNQMYLEIKLAVSAIPTMSLLTVPWFMLELNGYSKLYYDVDWEHHGLRKLLIEYATFIFFTDCGIYLAHRWLHWPRVYKALHKPHHKWLVCTPFASHAFHPVDGYFQSLSYHIYPMILPLHKISYLILFTFVNFWSVMIHDGQHMSNNPVVNGTACHTVHHLYFNYNYGQFTTLWDRLGGSYRRPEDSLFDPKLKMDKKVLEKQARETAAYIQEVEGDDTDRVYNTDKKKTN.

A run of 3 helical transmembrane segments spans residues 94-114 (FFSL…ITAS), 142-162 (LAVS…MLEL), and 181-201 (KLLI…YLAH). A Fatty acid hydroxylase domain is found at 188–312 (TFIFFTDCGI…FTTLWDRLGG (125 aa)). The Histidine box-1 motif lies at 201 to 205 (HRWLH). A Histidine box-2 motif is present at residues 214–218 (HKPHH). Residues 249–269 (ILPLHKISYLILFTFVNFWSV) form a helical membrane-spanning segment. The Histidine box-3 motif lies at 289–293 (HTVHH).

This sequence belongs to the sterol desaturase family. It depends on Fe cation as a cofactor.

Its subcellular location is the endoplasmic reticulum membrane. It carries out the reaction a Delta(7)-sterol + 2 Fe(II)-[cytochrome b5] + O2 + 2 H(+) = a Delta(5),Delta(7)-sterol + 2 Fe(III)-[cytochrome b5] + 2 H2O. It participates in steroid metabolism; ergosterol biosynthesis; ergosterol from zymosterol: step 3/5. Its function is as follows. Catalyzes the introduction of a C-5 double bond in the B ring of ergosterol. May contribute to the regulation of ergosterol biosynthesis. The protein is Delta(7)-sterol 5(6)-desaturase (ERG3) of Candida glabrata (strain ATCC 2001 / BCRC 20586 / JCM 3761 / NBRC 0622 / NRRL Y-65 / CBS 138) (Yeast).